The following is a 54-amino-acid chain: Ovomucoid (54 aa).

Residues 4-54 form the Kazal-like domain; the sequence is VDCSDYPKPACRMEYMPLCGSDNKTYGNKCNFCNAVVDSNGTLTLSHFGKC. Intrachain disulfides connect Cys-6–Cys-36, Cys-14–Cys-33, and Cys-22–Cys-54. Asn-43 carries an N-linked (GlcNAc...) asparagine glycan.

It is found in the secreted. The polypeptide is Ovomucoid (Cereopsis novaehollandiae (Cape Barren goose)).